The chain runs to 668 residues: SH2 domain-containing protein B (668 aa).

Positions 373-411 (SVSGSEESYQQCNSHPQTSRQFENGNGMRLHEEDNSSID) are disordered. The segment covering 374–396 (VSGSEESYQQCNSHPQTSRQFEN) has biased composition (polar residues). The SH2 domain maps to 574-642 (WIEGFITKEE…DNICESSERY (69 aa)).

Post-translationally, phosphorylated on tyrosine residues. Expressed in roots, leaves, stems and flowers.

The protein is SH2 domain-containing protein B of Arabidopsis thaliana (Mouse-ear cress).